Reading from the N-terminus, the 393-residue chain is Na(+)/H(+) antiporter NhaA 2 (393 aa).

Transmembrane regions (helical) follow at residues 18–38 (SGGLLLIASAAAALLVANSQL), 53–73 (LSVQHWVNDALMAVFFLMVGL), 91–111 (ILPGAAAAAGMAVPALVYLAF), 120–140 (GWAIPAATDIAFALGVISLLG), 149–169 (VFLAALAIIDDLGAVIVIGLF), 172–192 (TGVSLMDLGLAAAGVAALVAL), 208–228 (LVLWFFTYRSGVHATIAGVLL), 263–283 (FIIVPIFGFANAGVSFSGLGM), 294–314 (VAAGLAIGKLVGIFGAVLLLV), 332–352 (GTTLLCGIGFTMSLFISLLAF), and 363–383 (IGILIGSLVAGLAGFIVLRFS).

Belongs to the NhaA Na(+)/H(+) (TC 2.A.33) antiporter family.

It is found in the cell inner membrane. It carries out the reaction Na(+)(in) + 2 H(+)(out) = Na(+)(out) + 2 H(+)(in). Its function is as follows. Na(+)/H(+) antiporter that extrudes sodium in exchange for external protons. This is Na(+)/H(+) antiporter NhaA 2 from Brucella anthropi (strain ATCC 49188 / DSM 6882 / CCUG 24695 / JCM 21032 / LMG 3331 / NBRC 15819 / NCTC 12168 / Alc 37) (Ochrobactrum anthropi).